We begin with the raw amino-acid sequence, 494 residues long: Tetracenomycin biosynthesis bifunctional cyclase/O-methyl transferase TcmN (494 aa).

Residues Val11–Ile140 are polyketide cyclase. Ser67 serves as the catalytic Proton acceptor; for cyclase activity. Active-site proton donor; for cyclase activity residues include Arg69 and Arg82. Residues Leu169–Val494 are methyltransferase. S-adenosyl-L-methionine-binding positions include Asp358 and Gly384–Phe386. The active-site Proton acceptor; for methyltransferase activity is His405.

This sequence in the C-terminal section; belongs to the class I-like SAM-binding methyltransferase superfamily. Cation-independent O-methyltransferase family. In terms of assembly, the tetracenomycin polyketide synthase (TCM PKS) is composed of a ketosynthase complex (TcmKL), an acyl carrier protein (TcmM), a cyclase (TcmN) and a probable second cyclase (TcmJ). TcmN is a homodimer in solution.

The enzyme catalyses 10 malonyl-CoA + 8 H(+) = tetracenomycin F2 + 10 CO2 + 10 CoA + 2 H2O. It functions in the pathway antibiotic biosynthesis; tetracenomycin C biosynthesis. In terms of biological role, involved in the biosynthesis of tetracenomycin C (TCM C). Part of a type II polyketide synthase (PKS) that catalyzes the synthesis of tetracenomycin F2 (TCM F2), a precursor of TCM C, from malonyl-CoA. The TcmN N-terminal domain, when coupled with the other components of the PKS, catalyzes the cyclization and aromatization of the linear polyketide intermediate. Catalyzes the cyclization of the first and second rings. In addition, the C-terminal domain acts as a methyltransferase. It catalyzes the specific O-methylation of tetracenomycin D3 (TCM D3) to TCM B3, using S-adenosyl-L-methionine as the methyl donor. This is Tetracenomycin biosynthesis bifunctional cyclase/O-methyl transferase TcmN from Streptomyces glaucescens.